The following is a 244-amino-acid chain: rRNA adenine N-6-methyltransferase (244 aa).

The S-adenosyl-L-methionine site is built by Asn-11, Ile-13, Gly-38, Glu-59, Asp-84, and Ser-101.

The protein belongs to the class I-like SAM-binding methyltransferase superfamily. rRNA adenine N(6)-methyltransferase family.

Its function is as follows. Involved in erythromycin resistance. This chain is rRNA adenine N-6-methyltransferase (ermG), found in Lysinibacillus sphaericus (Bacillus sphaericus).